The sequence spans 100 residues: Urease subunit gamma (100 aa).

The protein belongs to the urease gamma subunit family. Heterotrimer of UreA (gamma), UreB (beta) and UreC (alpha) subunits. Three heterotrimers associate to form the active enzyme.

The protein localises to the cytoplasm. The catalysed reaction is urea + 2 H2O + H(+) = hydrogencarbonate + 2 NH4(+). The protein operates within nitrogen metabolism; urea degradation; CO(2) and NH(3) from urea (urease route): step 1/1. The sequence is that of Urease subunit gamma from Citrobacter koseri (strain ATCC BAA-895 / CDC 4225-83 / SGSC4696).